The primary structure comprises 190 residues: Xanthine phosphoribosyltransferase (190 aa).

2 residues coordinate xanthine: Leu-20 and Asn-27. Position 128 to 132 (128 to 132) interacts with 5-phospho-alpha-D-ribose 1-diphosphate; the sequence is ANGQA. Xanthine is bound at residue Lys-156.

The protein belongs to the purine/pyrimidine phosphoribosyltransferase family. Xpt subfamily. As to quaternary structure, homodimer.

The protein localises to the cytoplasm. The enzyme catalyses XMP + diphosphate = xanthine + 5-phospho-alpha-D-ribose 1-diphosphate. The protein operates within purine metabolism; XMP biosynthesis via salvage pathway; XMP from xanthine: step 1/1. In terms of biological role, converts the preformed base xanthine, a product of nucleic acid breakdown, to xanthosine 5'-monophosphate (XMP), so it can be reused for RNA or DNA synthesis. In Pediococcus pentosaceus (strain ATCC 25745 / CCUG 21536 / LMG 10740 / 183-1w), this protein is Xanthine phosphoribosyltransferase.